An 807-amino-acid chain; its full sequence is Spondin-1 (807 aa).

The signal sequence occupies residues 1–28 (MRLSPVLLRLSRGPALLALALPLAVALA). The 166-residue stretch at 29 to 194 (FSDETLDKVP…DSTFDGVTDK (166 aa)) folds into the Reelin domain. 17 disulfides stabilise this stretch: Cys-44–Cys-128, Cys-156–Cys-182, Cys-199–Cys-336, Cys-200–Cys-340, Cys-202–Cys-415, Cys-443–Cys-480, Cys-454–Cys-489, Cys-459–Cys-494, Cys-502–Cys-538, Cys-513–Cys-517, Cys-548–Cys-554, Cys-559–Cys-595, Cys-570–Cys-574, Cys-605–Cys-610, Cys-615–Cys-650, Cys-626–Cys-630, and Cys-660–Cys-665. Residues 195 to 388 (PILDCCACGT…LTSLDHPQSP (194 aa)) form the Spondin domain. Asn-214 is a glycosylation site (N-linked (GlcNAc...) asparagine). Residues Asp-325, Asp-354, and Asp-358 each contribute to the Ca(2+) site. TSP type-1 domains follow at residues 442–495 (TCIY…PGCS), 501–555 (TCTM…EECS), 558–611 (SCLT…PECH), 614–666 (PCLL…PECP), 668–721 (DCEL…RKCL), and 754–806 (GCRM…NVHP). A glycan (N-linked (GlcNAc...) asparagine) is linked at Asn-681.

As to quaternary structure, binds to the central extracellular domain of APP and inhibits beta-secretase cleavage of APP.

The protein localises to the secreted. Its subcellular location is the extracellular space. It is found in the extracellular matrix. Functionally, cell adhesion protein that promotes the attachment of spinal cord and sensory neuron cells and the outgrowth of neurites in vitro. May contribute to the growth and guidance of axons in both the spinal cord and the PNS. Major factor for vascular smooth muscle cell. The polypeptide is Spondin-1 (SPON1) (Bos taurus (Bovine)).